Reading from the N-terminus, the 344-residue chain is Dihydroorotase (344 aa).

Residues His-14 and His-16 each coordinate Zn(2+). Substrate is bound by residues 16–18 and Asn-42; that span reads HVR. The Zn(2+) site is built by Lys-99, His-136, and His-174. Residue Lys-99 is modified to N6-carboxylysine. His-136 is a substrate binding site. Position 219 (Leu-219) interacts with substrate. Zn(2+) is bound at residue Asp-247. Asp-247 is an active-site residue. His-251 and Ala-263 together coordinate substrate.

Belongs to the metallo-dependent hydrolases superfamily. DHOase family. Class II DHOase subfamily. Homodimer. It depends on Zn(2+) as a cofactor.

It carries out the reaction (S)-dihydroorotate + H2O = N-carbamoyl-L-aspartate + H(+). Its pathway is pyrimidine metabolism; UMP biosynthesis via de novo pathway; (S)-dihydroorotate from bicarbonate: step 3/3. Catalyzes the reversible cyclization of carbamoyl aspartate to dihydroorotate. This Leptothrix cholodnii (strain ATCC 51168 / LMG 8142 / SP-6) (Leptothrix discophora (strain SP-6)) protein is Dihydroorotase.